The primary structure comprises 380 residues: Glucose-1-phosphate adenylyltransferase (380 aa).

Alpha-D-glucose 1-phosphate-binding positions include Gly164, 179–180 (EK), and Ser190.

It belongs to the bacterial/plant glucose-1-phosphate adenylyltransferase family. As to quaternary structure, homotetramer.

It carries out the reaction alpha-D-glucose 1-phosphate + ATP + H(+) = ADP-alpha-D-glucose + diphosphate. The protein operates within glycan biosynthesis; glycogen biosynthesis. In terms of biological role, involved in the biosynthesis of ADP-glucose, a building block required for the elongation reactions to produce glycogen. Catalyzes the reaction between ATP and alpha-D-glucose 1-phosphate (G1P) to produce pyrophosphate and ADP-Glc. The polypeptide is Glucose-1-phosphate adenylyltransferase (Streptococcus sanguinis (strain SK36)).